Here is a 290-residue protein sequence, read N- to C-terminus: Diaminopimelate epimerase (290 aa).

Residues N11 and N78 each contribute to the substrate site. The active-site Proton donor is the C87. Residues 88-89 (GN), N163, N199, and 217-218 (ER) each bind substrate. The active-site Proton acceptor is the C226. 227–228 (GT) contributes to the substrate binding site.

The protein belongs to the diaminopimelate epimerase family. Homodimer.

Its subcellular location is the cytoplasm. The enzyme catalyses (2S,6S)-2,6-diaminopimelate = meso-2,6-diaminopimelate. Its pathway is amino-acid biosynthesis; L-lysine biosynthesis via DAP pathway; DL-2,6-diaminopimelate from LL-2,6-diaminopimelate: step 1/1. Catalyzes the stereoinversion of LL-2,6-diaminopimelate (L,L-DAP) to meso-diaminopimelate (meso-DAP), a precursor of L-lysine and an essential component of the bacterial peptidoglycan. This chain is Diaminopimelate epimerase, found in Mycobacterium ulcerans (strain Agy99).